Consider the following 833-residue polypeptide: Leucine--tRNA ligase (833 aa).

Residues 41–52 (PYPSGAGLHVGH) carry the 'HIGH' region motif. The 'KMSKS' region motif lies at 610–614 (KMSKS). Lys-613 contacts ATP.

Belongs to the class-I aminoacyl-tRNA synthetase family.

It localises to the cytoplasm. The catalysed reaction is tRNA(Leu) + L-leucine + ATP = L-leucyl-tRNA(Leu) + AMP + diphosphate. In Streptococcus sanguinis (strain SK36), this protein is Leucine--tRNA ligase.